The chain runs to 2616 residues: Serine protease ndl (2616 aa).

The signal sequence occupies residues 1–43; it reads MNYNMDEMEATRLLRHPRRWWSIGFGKRIVAISILVIIVLLFS. Serine 215 and serine 220 each carry phosphoserine. The stretch at 261–269 is one WIID 1 repeat; it reads ISWIIDGHD. An N-linked (GlcNAc...) asparagine glycan is attached at asparagine 291. The WIID 2 repeat unit spans residues 320 to 328; the sequence is ISWILDHFD. Asparagine 347 is a glycosylation site (N-linked (GlcNAc...) asparagine). The tract at residues 352–375 is disordered; it reads SASSEPIVDTENTNSDHVPTTENG. An N-linked (GlcNAc...) asparagine glycan is attached at asparagine 379. Residues 399-407 form a WIID 3 repeat; the sequence is FDWILDGEE. Asparagine 417 is a glycosylation site (N-linked (GlcNAc...) asparagine). 2 WIID repeats span residues 446–454 and 477–485; these read FDWIIDGRE and FDWIIDGEE. Residues asparagine 492 and asparagine 515 are each glycosylated (N-linked (GlcNAc...) asparagine). A WIID 6 repeat occupies 528-536; sequence FDWIIDGGE. Residues 537 to 547 are compositionally biased toward low complexity; the sequence is SSGEVSTSSTS. The disordered stretch occupies residues 537–574; that stretch reads SSGEVSTSSTSQPKLTTREAISNPESPRSSHPLDNPTS. Residues 548–565 show a composition bias toward polar residues; sequence QPKLTTREAISNPESPRS. A phosphoserine mark is found at serine 574 and serine 581. Residue asparagine 598 is glycosylated (N-linked (GlcNAc...) asparagine). Serine 794 carries O-linked (Xyl...) (glycosaminoglycan) serine glycosylation. Residues 798–817 form a disordered region; that stretch reads GQGANIFSKNASPQKPTNGQ. Polar residues predominate over residues 804–817; the sequence is FSKNASPQKPTNGQ. Residue asparagine 827 is glycosylated (N-linked (GlcNAc...) asparagine). The O-linked (Xyl...) (glycosaminoglycan) serine glycan is linked to serine 829. The N-linked (GlcNAc...) asparagine glycan is linked to asparagine 861. LDL-receptor class A domains lie at 889-929 and 955-1006; these read SRCP…ACTC and FGCE…QCSM. 3 disulfides stabilise this stretch: cysteine 891–cysteine 905, cysteine 899–cysteine 918, and cysteine 912–cysteine 927. The region spanning 929–956 is the LDL-receptor class A 2; truncated domain; it reads CADRVDEERLCDGYEDCPMGEDELGCFG. Disulfide bonds link cysteine 957–cysteine 982, cysteine 964–cysteine 995, and cysteine 989–cysteine 1004. A glycan (N-linked (GlcNAc...) asparagine) is linked at asparagine 975. The Cell attachment site motif lies at 1031–1033; sequence RGD. A glycan (N-linked (GlcNAc...) asparagine) is linked at asparagine 1064. Phosphoserine occurs at positions 1134 and 1136. The Peptidase S1 1 domain maps to 1145-1383; it reads IVGGSYTSAL…YLDWLEMATT (239 aa). Cysteine 1170 and cysteine 1186 are oxidised to a cystine. Active-site charge relay system residues include histidine 1185 and aspartate 1233. 6 disulfide bridges follow: cysteine 1276/cysteine 1338, cysteine 1305/cysteine 1317, cysteine 1328/cysteine 1359, cysteine 1396/cysteine 1408, cysteine 1401/cysteine 1421, and cysteine 1415/cysteine 1430. Serine 1332 acts as the Charge relay system in catalysis. The region spanning 1394–1432 is the LDL-receptor class A 4 domain; it reads QLCPGFICVWGGKRCIAKRQRCDRNVDCLGGEDEVGCTY. The N-linked (GlcNAc...) asparagine glycan is linked to asparagine 1445. Disordered stretches follow at residues 1530 to 1557 and 1683 to 1704; these read FTVSDSATSPSTLLPTTTNPSTWLPSTN and PTTTTESAKTTTTHSSSTHSEK. Low complexity-rich tracts occupy residues 1537-1557 and 1683-1700; these read TSPSTLLPTTTNPSTWLPSTN and PTTTTESAKTTTTHSSST. The region spanning 1713 to 1743 is the LDL-receptor class A 5; truncated domain; that stretch reads FVCKKMSQIVDIMMRCDRKVDCEDGTDELDC. Disulfide bonds link cysteine 1728–cysteine 1745, cysteine 1734–cysteine 1764, cysteine 1758–cysteine 1773, cysteine 1776–cysteine 1789, cysteine 1783–cysteine 1802, and cysteine 1796–cysteine 1811. The region spanning 1745–1775 is the LDL-receptor class A 6; truncated domain; that stretch reads CKDYLKGSLKGLICDGKADCEDLTDEQNCVE. The 40-residue stretch at 1774 to 1813 folds into the LDL-receptor class A 7 domain; sequence VECQSNEFRCPLSKTCLPLSSRCDNKVDCKFKEDEKDCFA. 3 N-linked (GlcNAc...) asparagine glycosylation sites follow: asparagine 1878, asparagine 1956, and asparagine 2023. Positions 2027–2301 constitute a Peptidase S1 2 domain; the sequence is LVNEQLHEAI…LQDIIDKPSC (275 aa). The cysteines at positions 2055 and 2071 are disulfide-linked. N-linked (GlcNAc...) asparagine glycosylation is found at asparagine 2144, asparagine 2173, asparagine 2197, asparagine 2237, and asparagine 2269. Cysteine 2177 and cysteine 2230 are oxidised to a cystine. LDL-receptor class A domains are found at residues 2308-2346, 2349-2389, and 2419-2459; these read PDCSTHRCPLGTCLPQAAMCNGRSDCHDGSDEEETKCRQ, QQCA…ICSC, and CNCT…YCFG. Cystine bridges form between cysteine 2310–cysteine 2320, cysteine 2315–cysteine 2333, cysteine 2327–cysteine 2344, cysteine 2351–cysteine 2364, cysteine 2358–cysteine 2377, and cysteine 2371–cysteine 2387. The LDL-receptor class A 10; truncated domain maps to 2387–2419; sequence CSCFTYLQATDPSKICDGKRNCWDKSDESSVLC. Residue asparagine 2420 is glycosylated (N-linked (GlcNAc...) asparagine). Disulfide bonds link cysteine 2421/cysteine 2435, cysteine 2428/cysteine 2448, and cysteine 2442/cysteine 2457. Asparagine 2556 and asparagine 2601 each carry an N-linked (GlcNAc...) asparagine glycan.

This sequence belongs to the peptidase S1 family. Post-translationally, requires cleavage for activation (presumably). As to expression, follicle.

It localises to the secreted. Its subcellular location is the extracellular space. The protein resides in the extracellular matrix. Functionally, component of the extracellular signaling pathway that establishes the dorsal-ventral pathway of the embryo. A protease cascade involving ndl, gd, snk and ea results in activation of the spz Toll receptor ligand; acts upstream of gd, snk and ea and is required for proteolytic processing of gd. Activation of ea requires activation of the ndl-gd-snk protease cascade and sulfation of a vitelline membrane component by pip. Localized activation of the Toll receptor in the ventral region of the embryo defines cell identities along the dorsal-ventral continuum. The sequence is that of Serine protease ndl from Drosophila melanogaster (Fruit fly).